Reading from the N-terminus, the 557-residue chain is Formate--tetrahydrofolate ligase 2 (557 aa).

66–73 contacts ATP; it reads TPAGEGKT.

It belongs to the formate--tetrahydrofolate ligase family.

The enzyme catalyses (6S)-5,6,7,8-tetrahydrofolate + formate + ATP = (6R)-10-formyltetrahydrofolate + ADP + phosphate. The protein operates within one-carbon metabolism; tetrahydrofolate interconversion. The protein is Formate--tetrahydrofolate ligase 2 of Streptococcus pyogenes serotype M4 (strain MGAS10750).